A 329-amino-acid polypeptide reads, in one-letter code: 2,3,4,5-tetrahydropyridine-2,6-dicarboxylate N-succinyltransferase (329 aa).

The Mg(2+) site is built by aspartate 177 and glutamate 194. Glutamate 210 acts as the Acyl-anhydride intermediate in catalysis. Succinyl-CoA contacts are provided by residues arginine 212, glycine 227, serine 230, alanine 253, 268 to 269, glycine 276, lysine 288, and 301 to 304; these read EA and RRNS.

The protein belongs to the type 2 tetrahydrodipicolinate N-succinyltransferase family. In terms of assembly, homotrimer.

Its subcellular location is the cytoplasm. It catalyses the reaction (S)-2,3,4,5-tetrahydrodipicolinate + succinyl-CoA + H2O = (S)-2-succinylamino-6-oxoheptanedioate + CoA. The protein operates within amino-acid biosynthesis; L-lysine biosynthesis via DAP pathway; LL-2,6-diaminopimelate from (S)-tetrahydrodipicolinate (succinylase route): step 1/3. Functionally, catalyzes the conversion of the cyclic tetrahydrodipicolinate (THDP) into the acyclic N-succinyl-L-2-amino-6-oxopimelate using succinyl-CoA. The sequence is that of 2,3,4,5-tetrahydropyridine-2,6-dicarboxylate N-succinyltransferase from Streptomyces coelicolor (strain ATCC BAA-471 / A3(2) / M145).